The primary structure comprises 428 residues: uncharacterized protein (428 aa).

Residue H68 coordinates Zn(2+). The active-site Proton acceptor is the E71. Zn(2+) contacts are provided by H72 and E143.

The protein belongs to the peptidase M16 family. Zn(2+) is required as a cofactor.

This is an uncharacterized protein from Bacillus subtilis (strain 168).